The chain runs to 879 residues: Phosphoenolpyruvate carboxylase (879 aa).

Residues His137 and Lys545 contribute to the active site.

Belongs to the PEPCase type 1 family. It depends on Mg(2+) as a cofactor.

It carries out the reaction oxaloacetate + phosphate = phosphoenolpyruvate + hydrogencarbonate. In terms of biological role, forms oxaloacetate, a four-carbon dicarboxylic acid source for the tricarboxylic acid cycle. In Yersinia enterocolitica serotype O:8 / biotype 1B (strain NCTC 13174 / 8081), this protein is Phosphoenolpyruvate carboxylase.